Consider the following 299-residue polypeptide: uncharacterized protein (299 aa).

This is an uncharacterized protein from Acanthamoeba polyphaga mimivirus (APMV).